The following is a 141-amino-acid chain: Nucleoside diphosphate kinase 1 (141 aa).

6 residues coordinate ATP: Lys11, Phe59, Arg87, Thr93, Arg104, and Asn114. His117 functions as the Pros-phosphohistidine intermediate in the catalytic mechanism.

Belongs to the NDK family. Homotetramer. Mg(2+) serves as cofactor.

Its subcellular location is the cytoplasm. The catalysed reaction is a 2'-deoxyribonucleoside 5'-diphosphate + ATP = a 2'-deoxyribonucleoside 5'-triphosphate + ADP. It catalyses the reaction a ribonucleoside 5'-diphosphate + ATP = a ribonucleoside 5'-triphosphate + ADP. Functionally, major role in the synthesis of nucleoside triphosphates other than ATP. The ATP gamma phosphate is transferred to the NDP beta phosphate via a ping-pong mechanism, using a phosphorylated active-site intermediate. The sequence is that of Nucleoside diphosphate kinase 1 from Protochlamydia amoebophila (strain UWE25).